We begin with the raw amino-acid sequence, 209 residues long: Glycine cleavage system H-like protein gcvH4 (209 aa).

The segment covering 35–51 has biased composition (low complexity); the sequence is NNNNNNNNNNNNNNNNN. The segment at 35-56 is disordered; it reads NNNNNNNNNNNNNNNNNRNKKL. The Lipoyl-binding domain maps to 73–159; sequence FATIGITNYV…KTTTTTTKIK (87 aa).

Belongs to the GcvH family.

The sequence is that of Glycine cleavage system H-like protein gcvH4 (gcvH4) from Dictyostelium discoideum (Social amoeba).